Here is a 258-residue protein sequence, read N- to C-terminus: Isoprenyl transferase 2 (258 aa).

Residues 1 to 18 (MNFPPIHPSTPKMTPPDL) are compositionally biased toward pro residues. The disordered stretch occupies residues 1 to 21 (MNFPPIHPSTPKMTPPDLDPQ). The active site involves Asp32. A Mg(2+)-binding site is contributed by Asp32. Residues 33–36 (GNGR), Trp37, Arg45, His49, and 77–79 (STE) each bind substrate. Asn80 acts as the Proton acceptor in catalysis. Substrate contacts are provided by residues Trp81, Arg83, Arg200, and 206 to 208 (RLS). Residue Glu219 coordinates Mg(2+).

This sequence belongs to the UPP synthase family. In terms of assembly, homodimer. Mg(2+) serves as cofactor.

Catalyzes the condensation of isopentenyl diphosphate (IPP) with allylic pyrophosphates generating different type of terpenoids. This is Isoprenyl transferase 2 from Nostoc sp. (strain PCC 7120 / SAG 25.82 / UTEX 2576).